Here is a 648-residue protein sequence, read N- to C-terminus: Rab11 family-interacting protein 1 (648 aa).

Residues 1–129 enclose the C2 domain; that stretch reads MSLAASAGRG…DQSRRKKQWY (129 aa). The span at 164–188 shows a compositional bias: basic and acidic residues; it reads SMKDKSRNPFGKLKDKIKGKNKDNT. 3 disordered regions span residues 164 to 470, 483 to 503, and 516 to 555; these read SMKD…GRKG, VRRPEKDAVPVASQWGSSQNP, and VESKCEPKPPVPVPRTPQTRAVKPRPHPVKPMNTTAPKIT. Residues 189 to 201 are compositionally biased toward polar residues; the sequence is SDTASAIVPSTTP. 3 positions are modified to phosphoserine: S205, S209, and S237. Polar residues-rich tracts occupy residues 227–242 and 271–296; these read PSLQKTPLSQSMSVLP and SSASEVMSQKRTSSTDHTQPNQSNFS. Phosphoserine occurs at positions 304, 319, 343, 345, 347, 349, 360, 361, and 386. The span at 314-323 shows a compositional bias: polar residues; the sequence is DSLSRSNVCI. Composition is skewed to basic and acidic residues over residues 381 to 394 and 422 to 436; these read SDRRLSDSSTKDSM and ATKETKDSKKQESKK. The residue at position 438 (S438) is a Phosphoserine. Positions 445-454 are enriched in basic and acidic residues; that stretch reads GKKDVAKGSE. The FIP-RBD domain occupies 576–638; the sequence is KKYQPSDPAF…EETPNILRVP (63 aa). The segment at 584–648 is necessary for interaction with RAB4A and RAB11A, subcellular location and endosomal recycling; it reads AFAYAQLTHD…AQTGKKAGKM (65 aa).

In terms of assembly, homooligomer. Interacts with RAB11A, RAB11B, RAB25, RAB4A and RAB14.

It is found in the recycling endosome. The protein localises to the cytoplasmic vesicle. Its function is as follows. A Rab11 effector protein involved in the endosomal recycling process. Also involved in controlling membrane trafficking along the phagocytic pathway and in phagocytosis. Interaction with RAB14 may function in the process of neurite formation. This Rattus norvegicus (Rat) protein is Rab11 family-interacting protein 1.